The following is a 524-amino-acid chain: Phytoene desaturase (neurosporene-forming) (524 aa).

Position 12–45 (12–45) interacts with FAD; the sequence is VVIGAGLGGLAAAMRLGAKGYKVTVVDRLDRPGG. The disordered stretch occupies residues 500–524; the sequence is PDAPKPETPAAAAPKARTPRAKAAQ. A compositionally biased stretch (low complexity) spans 507–524; sequence TPAAAAPKARTPRAKAAQ.

Belongs to the carotenoid/retinoid oxidoreductase family. FAD is required as a cofactor.

The enzyme catalyses 15-cis-phytoene + 3 A = all-trans-neurosporene + 3 AH2. It participates in carotenoid biosynthesis. Is inhibited by diphenylamine (DPA). Is also slightly inhibited by NAD, NADP or ATP in the presence of FAD. Functionally, converts phytoene into all-trans-neurosporene as the major product, via the intermediary of phytofluene and zeta-carotene, by the introduction of three double bonds. Both intermediates, phytofluene and zeta-carotene, can be used as substrates and converted to neurosporene. 1,2-epoxy phytoene is also a suitable substrate whereas the C30 diapophytoene is not. In Rhodobacter capsulatus (strain ATCC BAA-309 / NBRC 16581 / SB1003), this protein is Phytoene desaturase (neurosporene-forming) (crtI).